A 417-amino-acid polypeptide reads, in one-letter code: Carboxypeptidase B (417 aa).

A signal peptide spans 1 to 15; the sequence is MLALLVLVTVALASA. Positions 16 to 110 are cleaved as a propeptide — activation peptide; it reads HHGGEHFEGE…VEAQFDSRVR (95 aa). The 295-residue stretch at 118-412 folds into the Peptidase M14 domain; the sequence is KYNKWETIEA…LAIKYVASYV (295 aa). A disulfide bridge connects residues cysteine 173 and cysteine 186. Residues histidine 176 and glutamate 179 each coordinate Zn(2+). Substrate is bound by residues 176–179, arginine 234, and 251–252; these read HARE and NR. 2 cysteine pairs are disulfide-bonded: cysteine 245-cysteine 268 and cysteine 259-cysteine 273. Residue histidine 304 coordinates Zn(2+). Substrate contacts are provided by residues 305–306 and tyrosine 356; that span reads SY. The active-site Proton donor/acceptor is the glutamate 378.

This sequence belongs to the peptidase M14 family. Zn(2+) is required as a cofactor. Pancreas.

Its subcellular location is the secreted. It localises to the zymogen granule lumen. The enzyme catalyses Preferential release of a C-terminal lysine or arginine amino acid.. The chain is Carboxypeptidase B (CPB1) from Homo sapiens (Human).